The following is a 241-amino-acid chain: Zinc finger CCHC domain-containing protein 24 (241 aa).

2 positions are modified to phosphoserine: serine 65 and serine 93. The CCHC-type zinc-finger motif lies at 132-149 (YLCHLCFNKGHYIKDCPQ).

The polypeptide is Zinc finger CCHC domain-containing protein 24 (ZCCHC24) (Macaca fascicularis (Crab-eating macaque)).